The following is a 459-amino-acid chain: Serine permease SerP1 (459 aa).

A run of 12 helical transmembrane segments spans residues 19 to 39 (IQLIAIAGTIGTGLFLGAGKT), 42 to 62 (MTGPSVIFAYILIGIAMFFFL), 97 to 117 (SYWLVIVFVCISELTAIGTYI), 119 to 139 (FWLPHLPLWLIEIVMLALLFG), 153 to 173 (FWFAMIKVAAILGMIVTAIIL), 212 to 232 (FVGALQMVMFAFTSMEFIGMT), 254 to 274 (ILLFYVGALLAIMAIFNWHYI), 281 to 301 (FVIVFQLIGIKWAAALINFVV), 341 to 361 (AGIPINALYMATALSLLAPVL), 370 to 390 (AFNFAASCTTNLFLVVYFITL), 412 to 432 (PTIAVPFIAIIFAIVFASLFF), and 436 to 456 (TFYPALGAIVWTLIFGLYSHF).

Belongs to the amino acid-polyamine-organocation (APC) superfamily. Amino acid transporter (AAT) (TC 2.A.3.1) family.

It is found in the cell membrane. Its function is as follows. Transports L-serine, L-threonine and L-cysteine with high affinity. Stereoselective, with a strong preference for L-serine. Is the main L-serine transporter and is responsible for optimal growth in media containing free amino acids as the sole source of amino acids. Is also the main transporter for L-threonine. In Lactococcus lactis subsp. cremoris (strain MG1363), this protein is Serine permease SerP1.